A 336-amino-acid chain; its full sequence is tRNA(Ile)-lysidine synthase (336 aa).

21 to 26 lines the ATP pocket; that stretch reads SGGLDS.

Belongs to the tRNA(Ile)-lysidine synthase family.

Its subcellular location is the cytoplasm. The catalysed reaction is cytidine(34) in tRNA(Ile2) + L-lysine + ATP = lysidine(34) in tRNA(Ile2) + AMP + diphosphate + H(+). Functionally, ligates lysine onto the cytidine present at position 34 of the AUA codon-specific tRNA(Ile) that contains the anticodon CAU, in an ATP-dependent manner. Cytidine is converted to lysidine, thus changing the amino acid specificity of the tRNA from methionine to isoleucine. This chain is tRNA(Ile)-lysidine synthase, found in Helicobacter pylori (strain ATCC 700392 / 26695) (Campylobacter pylori).